The primary structure comprises 391 residues: DNA replication and repair protein RecF (391 aa).

Residue 30–37 participates in ATP binding; it reads GSNGQGKT.

Belongs to the RecF family.

The protein resides in the cytoplasm. The RecF protein is involved in DNA metabolism; it is required for DNA replication and normal SOS inducibility. RecF binds preferentially to single-stranded, linear DNA. It also seems to bind ATP. This chain is DNA replication and repair protein RecF, found in Saccharopolyspora erythraea (strain ATCC 11635 / DSM 40517 / JCM 4748 / NBRC 13426 / NCIMB 8594 / NRRL 2338).